The primary structure comprises 476 residues: MPPSIPVPSIVTRAIPSLARAASTTTKSTPSKEHHVHSYSPEVLPLGYAVASTHASIKKKTGALDLGILVSTTDKPASAAACLTRNVFKAAPVTVTTQLLQSGGGRARGFIVNSGCANAVTGKKGLEDAWEMSNTVTSQLPPGQRGIGTLVMSTGVIGQPLPISSIISKIPELVRSLDDSPKSWLDLSKSFMTTDTFPKLRAKSFRLGERLVRIAGIDKGAGMIAPSMGPPQPPHATLLGVIATDAAISPPALQSALNYAVDRSFNNITVDGDMSTNDSIICLANGAAGKLETQGRETAEGMEEITEDGHPEEYKVFREELRSFAEELAQLVVRDGEGATKFVTIRVKNAPSYETAQAVAKSIANSSLFKTAMYGEDANWGRILCAVGYTPTAQAIIPNHVSVSFIPSANVSDPTPLRLLTNGEPEANIDEDRASVILAEEDLEVEVDLGDGHEEAKVWTCDFSHEYVTINGSYRS.

Substrate contacts are provided by Thr-193, Lys-219, Thr-237, Glu-337, Asn-471, and Ser-476. Thr-237 acts as the Nucleophile in catalysis.

The protein belongs to the ArgJ family. In terms of assembly, heterodimer of an alpha and a beta chain. The alpha and beta chains are autoproteolytically processed from a single precursor protein within the mitochondrion.

The protein resides in the mitochondrion matrix. The enzyme catalyses N(2)-acetyl-L-ornithine + L-glutamate = N-acetyl-L-glutamate + L-ornithine. It catalyses the reaction L-glutamate + acetyl-CoA = N-acetyl-L-glutamate + CoA + H(+). It participates in amino-acid biosynthesis; L-arginine biosynthesis; L-ornithine and N-acetyl-L-glutamate from L-glutamate and N(2)-acetyl-L-ornithine (cyclic): step 1/1. It functions in the pathway amino-acid biosynthesis; L-arginine biosynthesis; N(2)-acetyl-L-ornithine from L-glutamate: step 1/4. Its function is as follows. Catalyzes two activities which are involved in the cyclic version of arginine biosynthesis: the synthesis of acetylglutamate from glutamate and acetyl-CoA, and of ornithine by transacetylation between acetylornithine and glutamate. The sequence is that of Arginine biosynthesis bifunctional protein ArgJ, mitochondrial from Cryptococcus neoformans var. neoformans serotype D (strain B-3501A) (Filobasidiella neoformans).